We begin with the raw amino-acid sequence, 830 residues long: Serine/threonine-protein kinase atg1 (830 aa).

Residues 14 to 307 form the Protein kinase domain; that stretch reads YVIRSEIGRG…YDGFFSSIVV (294 aa). ATP-binding positions include 20-28 and Lys-43; that span reads IGRGSFAIV. Asp-157 (proton acceptor) is an active-site residue. Ser-346 is subject to Phosphoserine. Over residues 448-468 the composition is skewed to polar residues; sequence TQLSNESLTHEQSINGNSPSP. A disordered region spans residues 448 to 480; the sequence is TQLSNESLTHEQSINGNSPSPNEGVFQGSFSPE.

This sequence belongs to the protein kinase superfamily. Ser/Thr protein kinase family. APG1/unc-51/ULK1 subfamily. As to quaternary structure, homodimer. Component of the atg1 kinase complex composed of at least atg1, atg13, atg17 and atg101. Interacts directly with atg13. Post-translationally, phosphorylated. Dephosphorylated under depletion of nitrogen.

It carries out the reaction L-seryl-[protein] + ATP = O-phospho-L-seryl-[protein] + ADP + H(+). It catalyses the reaction L-threonyl-[protein] + ATP = O-phospho-L-threonyl-[protein] + ADP + H(+). Functionally, serine/threonine protein kinase involved in the cytoplasm to vacuole transport (Cvt) and found to be essential in autophagy, where it is required for the formation of autophagosomes. Involved in the clearance of protein aggregates which cannot be efficiently cleared by the proteasome. Required for selective autophagic degradation of the nucleus (nucleophagy) as well as for mitophagy which contributes to regulate mitochondrial quantity and quality by eliminating the mitochondria to a basal level to fulfill cellular energy requirements and preventing excess ROS production. Also involved in endoplasmic reticulum-specific autophagic process, in selective removal of ER-associated degradation (ERAD) substrates. Plays a key role in ATG9 and ATG23 cycling through the pre-autophagosomal structure and is necessary to promote ATG18 binding to ATG9 through phosphorylation of ATG9. Catalyzes phosphorylation of ATG4, decreasing the interaction between ATG4 and ATG8 and impairing deconjugation of PE-conjugated forms of ATG8. Autophagy functions to supply nitrogen and is activated when cells cannot access exogenous nitrogen, thus ensuring that they can adapt and subsequently propagate. Finally, atg13 is also required for glycogen storage during stationary phase and has a role in meiosis and sporulation. The chain is Serine/threonine-protein kinase atg1 from Schizosaccharomyces pombe (strain 972 / ATCC 24843) (Fission yeast).